Here is a 422-residue protein sequence, read N- to C-terminus: MNQVELLSPAGNLKKLKIALNYGADAVYGGVSHFSLRNRAGKEFTLETFKEGIDYAHALDKKVYATINGFPFNSQLKLLEEHLYKMAELEPDAFIIAAPGVIKLASKIAPHIPVHLSTQANVLNTLDAQVFYDLGVKRIVCARELSLNDAVEIKKALPDLELEIFVHGSMCFAFSGRCLISALQKGRVPNRGSCANDCRFDYEYYVKNPDNGVMMRLVEEEGVGTHIFNAKDLNLSGHIAEILSSNAISALKIEGRTKSSYYAAQTTRIYRLAVDDFYHNTLKPSFYASELNTLKNRGFTDGYLMRRPFERLDTQNHQTAISEGDFQVNGEITEDGRFFACKFTTTTNTAYEIIAPKNAAITPIVNDIGKIYTFEKRSYLVLYKILLENNTELETIHSGNVNLVRLPAPLPAFSFLRTQVRV.

An N-terminal signal peptide occupies residues 1–58; that stretch reads MNQVELLSPAGNLKKLKIALNYGADAVYGGVSHFSLRNRAGKEFTLETFKEGIDYAHA.

The protein belongs to the peptidase U32 family.

In terms of biological role, involved in prephenate-dependent formation of 5-hydroxyuridine (ho5U) modification at position 34 in tRNAs, the first step in 5-carboxymethoxyuridine (cmo5U) biosynthesis. In Helicobacter pylori (strain J99 / ATCC 700824) (Campylobacter pylori J99), this protein is tRNA hydroxylation protein P.